Reading from the N-terminus, the 933-residue chain is Serine/threonine-protein kinase EDR1 (933 aa).

Residues 1-10 show a composition bias toward basic residues; that stretch reads MKHIFKKLHR. Disordered stretches follow at residues 1–74, 342–424, 527–550, and 604–650; these read MKHI…ADYM, CNSN…TAIG, HRDP…AISS, and HGQQ…YRND. The span at 37-48 shows a compositional bias: polar residues; that stretch reads NPPQATPSSVTE. Over residues 53-68 the composition is skewed to low complexity; the sequence is AGATSSMASPAPTAAS. Positions 342-356 are enriched in polar residues; the sequence is CNSNGNKFPTAQFSN. The span at 367–378 shows a compositional bias: low complexity; it reads SSHSSMANYSSS. Positions 379 to 389 are enriched in basic and acidic residues; sequence LDRRTEAERTD. The span at 404 to 413 shows a compositional bias: low complexity; the sequence is SSPSSVTSST. A compositionally biased stretch (polar residues) spans 533–550; sequence GNTQSSYATSSSNGAISS. Residues 607–621 show a composition bias toward basic and acidic residues; sequence QNDESHIHDHRKYTS. A Protein kinase domain is found at 669-925; the sequence is LVIAERIGLG…QLTEVLKPLN (257 aa). ATP is bound by residues 675–683 and Lys-696; that span reads IGLGSYGEV. Asp-792 (proton acceptor) is an active-site residue.

The protein belongs to the protein kinase superfamily. TKL Ser/Thr protein kinase family. RAF subfamily. Interacts with KEG. Binds and recruited by EDR4 at the powdery mildew (e.g. G.cichoracearum) penetration site on the plasma membrane. In terms of processing, autophosphorylated.

The protein localises to the cell membrane. Its subcellular location is the endosome. It is found in the nucleus. It localises to the endoplasmic reticulum. The protein resides in the golgi apparatus. The protein localises to the trans-Golgi network. Its subcellular location is the early endosome. The enzyme catalyses L-seryl-[protein] + ATP = O-phospho-L-seryl-[protein] + ADP + H(+). It carries out the reaction L-threonyl-[protein] + ATP = O-phospho-L-threonyl-[protein] + ADP + H(+). MAPKKK serine/threonine-protein kinase involved in the regulation of a MAP kinase cascade (probably including MPK3 and MPK6) that negatively regulates salicylic acid- (SA-) dependent defense responses, abscisic acid (ABA) signaling, and ethylene-induced senescence. Also modulates stress response (e.g. drought) signaling and cell death, in an ORE9-dependent manner. Functions at a point of cross talk between ethylene, ABA and SA signaling that impinges on senescence and cell death. On the other hand, it confers sensitivity to various pathogens such as the fungus E.cichoracearum, the oomycete H.parasitica and the bacteria P.syringae pv. tomato DC3000. Required for resistance to some hemibiotrophic/necrotrophic fungal pathogens (e.g. C.gloeosporioides, C.higginsianum and A.brassicicola) through the induction of defensin expression, probably by repressing MYC2, an inhibitor of defensin genes (PDFs). Together with KEG, may regulate endocytic trafficking and/or the formation of signaling complexes on trans-Golgi network (TGN)/ early endosome (EE) vesicles during stress responses. This chain is Serine/threonine-protein kinase EDR1 (EDR1), found in Arabidopsis thaliana (Mouse-ear cress).